Reading from the N-terminus, the 253-residue chain is Imidazole glycerol phosphate synthase subunit HisF (253 aa).

Catalysis depends on residues Asp-11 and Asp-130.

The protein belongs to the HisA/HisF family. As to quaternary structure, heterodimer of HisH and HisF.

Its subcellular location is the cytoplasm. The enzyme catalyses 5-[(5-phospho-1-deoxy-D-ribulos-1-ylimino)methylamino]-1-(5-phospho-beta-D-ribosyl)imidazole-4-carboxamide + L-glutamine = D-erythro-1-(imidazol-4-yl)glycerol 3-phosphate + 5-amino-1-(5-phospho-beta-D-ribosyl)imidazole-4-carboxamide + L-glutamate + H(+). The protein operates within amino-acid biosynthesis; L-histidine biosynthesis; L-histidine from 5-phospho-alpha-D-ribose 1-diphosphate: step 5/9. Functionally, IGPS catalyzes the conversion of PRFAR and glutamine to IGP, AICAR and glutamate. The HisF subunit catalyzes the cyclization activity that produces IGP and AICAR from PRFAR using the ammonia provided by the HisH subunit. The sequence is that of Imidazole glycerol phosphate synthase subunit HisF from Acidobacterium capsulatum (strain ATCC 51196 / DSM 11244 / BCRC 80197 / JCM 7670 / NBRC 15755 / NCIMB 13165 / 161).